A 474-amino-acid polypeptide reads, in one-letter code: Eukaryotic translation initiation factor 3 subunit L (474 aa).

In terms of domain architecture, PCI spans 255 to 449; the sequence is DAIRMFSHIL…DLDYALQGDL (195 aa).

This sequence belongs to the eIF-3 subunit L family. As to quaternary structure, component of the eukaryotic translation initiation factor 3 (eIF-3) complex.

Its subcellular location is the cytoplasm. Its function is as follows. Component of the eukaryotic translation initiation factor 3 (eIF-3) complex, which is involved in protein synthesis of a specialized repertoire of mRNAs and, together with other initiation factors, stimulates binding of mRNA and methionyl-tRNAi to the 40S ribosome. The eIF-3 complex specifically targets and initiates translation of a subset of mRNAs involved in cell proliferation. In Chaetomium globosum (strain ATCC 6205 / CBS 148.51 / DSM 1962 / NBRC 6347 / NRRL 1970) (Soil fungus), this protein is Eukaryotic translation initiation factor 3 subunit L.